A 564-amino-acid polypeptide reads, in one-letter code: Adenine deaminase (564 aa).

This sequence belongs to the metallo-dependent hydrolases superfamily. Adenine deaminase family. The cofactor is Mn(2+).

The enzyme catalyses adenine + H2O + H(+) = hypoxanthine + NH4(+). The chain is Adenine deaminase from Deinococcus geothermalis (strain DSM 11300 / CIP 105573 / AG-3a).